The sequence spans 143 residues: Putative pre-16S rRNA nuclease (143 aa).

Belongs to the YqgF nuclease family.

It is found in the cytoplasm. Could be a nuclease involved in processing of the 5'-end of pre-16S rRNA. This is Putative pre-16S rRNA nuclease from Lactobacillus johnsonii (strain CNCM I-12250 / La1 / NCC 533).